The primary structure comprises 145 residues: Alpha-amylase/trypsin inhibitor CMa (145 aa).

A signal peptide spans 1–25 (MASKSSITPLLLAAVLASVFAAATA).

Belongs to the protease inhibitor I6 (cereal trypsin/alpha-amylase inhibitor) family. In terms of assembly, heterotetramer of one CMa, one CMb and two CMd chains. Five disulfide bonds, which are essential for the inhibitor activity, are probably present. In terms of tissue distribution, endosperm.

The protein resides in the secreted. Alpha-amylase/trypsin inhibitor. It could be involved in insect defense mechanisms. The chain is Alpha-amylase/trypsin inhibitor CMa (IAT1) from Hordeum vulgare (Barley).